Reading from the N-terminus, the 210-residue chain is Somatotropin-2 (210 aa).

The signal sequence occupies residues 1 to 22 (MARALVLLSVVLVSLLVNQGRA). H38 provides a ligand contact to Zn(2+). C71 and C183 form a disulfide bridge. Position 192 (E192) interacts with Zn(2+). A disulfide bridge connects residues C200 and C208.

It belongs to the somatotropin/prolactin family.

It localises to the secreted. In terms of biological role, growth hormone plays an important role in growth control and is involved in the regulation of several anabolic processes. Implicated as an osmoregulatory substance important for seawater adaptation. The polypeptide is Somatotropin-2 (gh2) (Carassius auratus (Goldfish)).